Reading from the N-terminus, the 176-residue chain is Mitochondrial inner membrane protein Mpv17 (176 aa).

The next 4 helical transmembrane spans lie at 18–38, 53–73, 94–114, and 131–151; these read VQVL…QQLV, TMAS…YRVL, GGFA…LNGL, and LITN…LVPL.

The protein belongs to the peroxisomal membrane protein PXMP2/4 family.

The protein resides in the mitochondrion inner membrane. Non-selective channel that modulates the membrane potential under normal conditions and oxidative stress, and is involved in mitochondrial homeostasis. Involved in mitochondrial deoxynucleoside triphosphates (dNTP) pool homeostasis and mitochondrial DNA (mtDNA) maintenance. May be involved in the regulation of reactive oxygen species metabolism and the control of oxidative phosphorylation. The sequence is that of Mitochondrial inner membrane protein Mpv17 from Bos taurus (Bovine).